Consider the following 284-residue polypeptide: NAD kinase (284 aa).

Aspartate 71 acts as the Proton acceptor in catalysis. NAD(+) contacts are provided by residues 71–72 (DG), 144–145 (ND), aspartate 174, 185–190 (TAYNLS), and glutamine 242.

Belongs to the NAD kinase family. It depends on a divalent metal cation as a cofactor.

It localises to the cytoplasm. The catalysed reaction is NAD(+) + ATP = ADP + NADP(+) + H(+). Involved in the regulation of the intracellular balance of NAD and NADP, and is a key enzyme in the biosynthesis of NADP. Catalyzes specifically the phosphorylation on 2'-hydroxyl of the adenosine moiety of NAD to yield NADP. In Sulfurimonas denitrificans (strain ATCC 33889 / DSM 1251) (Thiomicrospira denitrificans (strain ATCC 33889 / DSM 1251)), this protein is NAD kinase.